Reading from the N-terminus, the 211-residue chain is Small ribosomal subunit protein uS3 (211 aa).

One can recognise a KH type-2 domain in the interval 38–106 (LRKFIKKAFY…NIELNIIEVK (69 aa)).

Belongs to the universal ribosomal protein uS3 family. As to quaternary structure, part of the 30S ribosomal subunit. Forms a tight complex with proteins S10 and S14.

Functionally, binds the lower part of the 30S subunit head. Binds mRNA in the 70S ribosome, positioning it for translation. The protein is Small ribosomal subunit protein uS3 of Ehrlichia ruminantium (strain Gardel).